The following is a 168-amino-acid chain: Small ribosomal subunit protein uS8 (168 aa).

Residues glutamate 59–proline 93 form a not found in other S8 sequences region.

This sequence belongs to the universal ribosomal protein uS8 family. In terms of assembly, part of the 30S ribosomal subunit. Contacts proteins S5 and S12.

In terms of biological role, one of the primary rRNA binding proteins, it binds directly to 16S rRNA central domain where it helps coordinate assembly of the platform of the 30S subunit. This is Small ribosomal subunit protein uS8 from Aquifex pyrophilus.